Consider the following 574-residue polypeptide: Ribonuclease Y (574 aa).

A helical membrane pass occupies residues 1-21; sequence MSLLDLVLLLLVLGLGGVLLL. Residues 264 to 327 form the KH domain; the sequence is AVTVVPIPSD…EIARMALEEL (64 aa). Residues 390-483 enclose the HD domain; sequence VLKHSIQVAH…VAAADALSAA (94 aa).

Belongs to the RNase Y family.

It is found in the cell membrane. In terms of biological role, endoribonuclease that initiates mRNA decay. This Thermus thermophilus (strain ATCC 27634 / DSM 579 / HB8) protein is Ribonuclease Y.